Here is a 780-residue protein sequence, read N- to C-terminus: Subtilisin-like protease SBT5.1 (780 aa).

The first 25 residues, 1–25, serve as a signal peptide directing secretion; the sequence is MMRCLTITIMFFMFFFLSVIQKCKS. Positions 26–106 are cleaved as a propeptide — activation peptide; the sequence is ETSKSGDYII…VFPDQMLQLH (81 aa). Positions 33–106 constitute an Inhibitor I9 domain; sequence YIIYMGAASS…VFPDQMLQLH (74 aa). In terms of domain architecture, Peptidase S8 spans 110–617; it reads SWDFLVQESY…AGQVTIFGPS (508 aa). Asp-147 acts as the Charge relay system in catalysis. Asn-197 carries an N-linked (GlcNAc...) asparagine glycan. His-215 functions as the Charge relay system in the catalytic mechanism. A glycan (N-linked (GlcNAc...) asparagine) is linked at Asn-230. The PA domain occupies 385 to 469; that stretch reads IDANEEAARN…PEDGIQIMSY (85 aa). The N-linked (GlcNAc...) asparagine glycan is linked to Asn-471. Catalysis depends on Ser-550, which acts as the Charge relay system. N-linked (GlcNAc...) asparagine glycosylation occurs at Asn-776.

It belongs to the peptidase S8 family.

Its subcellular location is the secreted. This Arabidopsis thaliana (Mouse-ear cress) protein is Subtilisin-like protease SBT5.1.